A 487-amino-acid chain; its full sequence is ESCRT-I complex subunit vps23 (487 aa).

The SB domain maps to Ser428 to Ser487.

In terms of assembly, component of the ESCRT-I complex (endosomal sorting complex required for transport I).

It is found in the cytoplasm. It localises to the endosome. The protein resides in the late endosome membrane. Its function is as follows. Component of the ESCRT-I complex, a regulator of vesicular trafficking process. Binds to ubiquitinated cargo proteins and is required for the sorting of endocytic ubiquitinated cargos into multivesicular bodies (MVBs). Mediates the association to the ESCRT-0 complex. The sequence is that of ESCRT-I complex subunit vps23 (sst6) from Schizosaccharomyces pombe (strain 972 / ATCC 24843) (Fission yeast).